The sequence spans 110 residues: U1-lycotoxin-Ls1ee (110 aa).

The first 20 residues, 1–20, serve as a signal peptide directing secretion; the sequence is MKFVLLFGVLLVTLFSYSSA. The propeptide occupies 21-44; it reads EMLDDFDQADEDELLSLIEKEEAR. 4 cysteine pairs are disulfide-bonded: Cys47/Cys62, Cys54/Cys71, Cys61/Cys89, and Cys73/Cys87.

The protein belongs to the neurotoxin 19 (CSTX) family. 03 subfamily. As to expression, expressed by the venom gland.

The protein resides in the secreted. This Lycosa singoriensis (Wolf spider) protein is U1-lycotoxin-Ls1ee.